Here is a 333-residue protein sequence, read N- to C-terminus: Large ribosomal subunit protein uL3 (333 aa).

Belongs to the universal ribosomal protein uL3 family. Part of the 50S ribosomal subunit. Forms a cluster with proteins L14 and L24e.

One of the primary rRNA binding proteins, it binds directly near the 3'-end of the 23S rRNA, where it nucleates assembly of the 50S subunit. This Methanocorpusculum labreanum (strain ATCC 43576 / DSM 4855 / Z) protein is Large ribosomal subunit protein uL3.